A 514-amino-acid chain; its full sequence is Peptide chain release factor 3 (514 aa).

The 261-residue stretch at 8-268 folds into the tr-type G domain; it reads KKRRTFAIIS…IFLKFAPEPH (261 aa). Residues 17 to 24, 85 to 89, and 139 to 142 contribute to the GTP site; these read SHPDAGKT, DTPGH, and NKLD.

This sequence belongs to the TRAFAC class translation factor GTPase superfamily. Classic translation factor GTPase family. PrfC subfamily.

Its subcellular location is the cytoplasm. Functionally, increases the formation of ribosomal termination complexes and stimulates activities of RF-1 and RF-2. It binds guanine nucleotides and has strong preference for UGA stop codons. It may interact directly with the ribosome. The stimulation of RF-1 and RF-2 is significantly reduced by GTP and GDP, but not by GMP. This is Peptide chain release factor 3 from Streptococcus pneumoniae serotype 2 (strain D39 / NCTC 7466).